We begin with the raw amino-acid sequence, 522 residues long: Gypsy retrotransposon integrase-like protein 1 (522 aa).

One can recognise an Integrase catalytic domain in the interval 135–292; it reads KVENPWSLVT…TPYFQMFSRN (158 aa). Ser-502 is subject to Phosphoserine.

In terms of tissue distribution, widely expressed. Also found in tumors originating from parathyroid gland, colon, stomach, bladder, uterus and prostate.

The polypeptide is Gypsy retrotransposon integrase-like protein 1 (GIN1) (Homo sapiens (Human)).